A 256-amino-acid chain; its full sequence is Fumarate reductase iron-sulfur subunit (256 aa).

Residues 7–97 (MNVEVLRYNP…HMRIEPLANF (91 aa)) form the 2Fe-2S ferredoxin-type domain. Position 14 (Tyr-14) interacts with a menaquinone. Cys-58, Cys-63, Cys-66, and Cys-78 together coordinate [2Fe-2S] cluster. A 4Fe-4S ferredoxin-type domain is found at 151 to 180 (LEKYRQFSMCINCGLCYAACPQFGLNPEFL). [4Fe-4S] cluster contacts are provided by Cys-160, Cys-163, and Cys-166. [3Fe-4S] cluster contacts are provided by Cys-170, Cys-216, and Cys-222. Residue Cys-226 coordinates [4Fe-4S] cluster. Residue 237–240 (NQGK) coordinates a menaquinone.

Belongs to the succinate dehydrogenase/fumarate reductase iron-sulfur protein family. Fumarate dehydrogenase forms part of an enzyme complex containing four subunits: a flavoprotein, an iron-sulfur, and two hydrophobic anchor proteins. The cofactor is [2Fe-2S] cluster. [3Fe-4S] cluster serves as cofactor. [4Fe-4S] cluster is required as a cofactor.

It localises to the cell inner membrane. The catalysed reaction is a quinone + succinate = fumarate + a quinol. It carries out the reaction a menaquinone + succinate = a menaquinol + fumarate. This chain is Fumarate reductase iron-sulfur subunit (frdB), found in Haemophilus influenzae (strain ATCC 51907 / DSM 11121 / KW20 / Rd).